The following is a 153-amino-acid chain: Aspartate carbamoyltransferase regulatory chain (153 aa).

Residues C109, C114, C138, and C141 each contribute to the Zn(2+) site.

It belongs to the PyrI family. In terms of assembly, contains catalytic and regulatory chains. The cofactor is Zn(2+).

Functionally, involved in allosteric regulation of aspartate carbamoyltransferase. The sequence is that of Aspartate carbamoyltransferase regulatory chain from Enterobacter sp. (strain 638).